A 144-amino-acid chain; its full sequence is MAFTFAAFCYMLALLLTATLIFFAIWHIIAFDELKTDYKNPIDQCNTLNPLVLPEYLIHAFFCVMFLCAAEWLTLGLNMPLLAYHIWRYMSRPVMSGPGLYDPTTIMNADILAYCQKEGWCKLAFYLLAFFYYLYGMIYVLVSS.

Residues methionine 1–tyrosine 10 are Cytoplasmic-facing. Residues methionine 11 to phenylalanine 31 form a helical membrane-spanning segment. Residues aspartate 32–tyrosine 56 are Lumenal-facing. A helical transmembrane segment spans residues leucine 57–leucine 77. Topologically, residues asparagine 78–lysine 122 are cytoplasmic. The helical transmembrane segment at leucine 123–serine 143 threads the bilayer. Residue serine 144 is a topological domain, lumenal.

It belongs to the cornichon family. Interacts with AREG immature precursor and with immature TGFA, i.e. with a prosegment and lacking full N-glycosylation, but not with the fully N-glycosylated form. In the Golgi apparatus, may form a complex with GORASP55 and transmembrane TGFA.

The protein localises to the endoplasmic reticulum membrane. Its subcellular location is the golgi apparatus membrane. Involved in the selective transport and maturation of TGF-alpha family proteins. The sequence is that of Protein cornichon homolog 1 (CNIH1) from Pongo abelii (Sumatran orangutan).